Consider the following 455-residue polypeptide: Probable glycine dehydrogenase (decarboxylating) subunit 1 (455 aa).

Belongs to the GcvP family. N-terminal subunit subfamily. The glycine cleavage system is composed of four proteins: P, T, L and H. In this organism, the P 'protein' is a heterodimer of two subunits.

The enzyme catalyses N(6)-[(R)-lipoyl]-L-lysyl-[glycine-cleavage complex H protein] + glycine + H(+) = N(6)-[(R)-S(8)-aminomethyldihydrolipoyl]-L-lysyl-[glycine-cleavage complex H protein] + CO2. Functionally, the glycine cleavage system catalyzes the degradation of glycine. The P protein binds the alpha-amino group of glycine through its pyridoxal phosphate cofactor; CO(2) is released and the remaining methylamine moiety is then transferred to the lipoamide cofactor of the H protein. The polypeptide is Probable glycine dehydrogenase (decarboxylating) subunit 1 (Saccharolobus islandicus (strain Y.N.15.51 / Yellowstone #2) (Sulfolobus islandicus)).